The primary structure comprises 226 residues: Leucyl/phenylalanyl-tRNA--protein transferase (226 aa).

This sequence belongs to the L/F-transferase family.

It is found in the cytoplasm. The enzyme catalyses N-terminal L-lysyl-[protein] + L-leucyl-tRNA(Leu) = N-terminal L-leucyl-L-lysyl-[protein] + tRNA(Leu) + H(+). It carries out the reaction N-terminal L-arginyl-[protein] + L-leucyl-tRNA(Leu) = N-terminal L-leucyl-L-arginyl-[protein] + tRNA(Leu) + H(+). It catalyses the reaction L-phenylalanyl-tRNA(Phe) + an N-terminal L-alpha-aminoacyl-[protein] = an N-terminal L-phenylalanyl-L-alpha-aminoacyl-[protein] + tRNA(Phe). Its function is as follows. Functions in the N-end rule pathway of protein degradation where it conjugates Leu, Phe and, less efficiently, Met from aminoacyl-tRNAs to the N-termini of proteins containing an N-terminal arginine or lysine. The chain is Leucyl/phenylalanyl-tRNA--protein transferase from Pseudomonas fluorescens (strain ATCC BAA-477 / NRRL B-23932 / Pf-5).